Here is a 162-residue protein sequence, read N- to C-terminus: uncharacterized protein (162 aa).

3 Pentapeptide repeat domains span residues 33-72, 73-112, and 113-152; these read ASLI…NMTE, VCLI…DLRK, and ANLS…YISD.

This is an uncharacterized protein from Synechocystis sp. (strain ATCC 27184 / PCC 6803 / Kazusa).